The chain runs to 247 residues: UPF0246 protein CD630_18230 (247 aa).

It belongs to the UPF0246 family.

This Clostridioides difficile (strain 630) (Peptoclostridium difficile) protein is UPF0246 protein CD630_18230.